The sequence spans 356 residues: Histidinol-phosphate aminotransferase (356 aa).

Position 211 is an N6-(pyridoxal phosphate)lysine (K211).

The protein belongs to the class-II pyridoxal-phosphate-dependent aminotransferase family. Histidinol-phosphate aminotransferase subfamily. In terms of assembly, homodimer. Pyridoxal 5'-phosphate serves as cofactor.

It carries out the reaction L-histidinol phosphate + 2-oxoglutarate = 3-(imidazol-4-yl)-2-oxopropyl phosphate + L-glutamate. It participates in amino-acid biosynthesis; L-histidine biosynthesis; L-histidine from 5-phospho-alpha-D-ribose 1-diphosphate: step 7/9. The chain is Histidinol-phosphate aminotransferase from Aeromonas hydrophila subsp. hydrophila (strain ATCC 7966 / DSM 30187 / BCRC 13018 / CCUG 14551 / JCM 1027 / KCTC 2358 / NCIMB 9240 / NCTC 8049).